Here is a 152-residue protein sequence, read N- to C-terminus: Transcriptional regulator MraZ (152 aa).

2 SpoVT-AbrB domains span residues Ala5–Glu52 and Ala81–Thr124.

Belongs to the MraZ family. Dodecamer.

The protein localises to the cytoplasm. The protein resides in the nucleoid. Functionally, negatively regulates its own expression and that of the subsequent genes in the proximal part of the division and cell wall (dcw) gene cluster. Acts by binding directly to DNA. May also regulate the expression of genes outside the dcw cluster. The chain is Transcriptional regulator MraZ from Escherichia coli (strain K12).